The primary structure comprises 174 residues: RNA pyrophosphohydrolase (174 aa).

Residues 6–149 enclose the Nudix hydrolase domain; the sequence is GFRANVGIII…KRDVYRKVMK (144 aa). Positions 38–59 match the Nudix box motif; sequence GGVDDGESAEEAMYRELYEEVG.

Belongs to the Nudix hydrolase family. RppH subfamily. Requires a divalent metal cation as cofactor.

Its function is as follows. Accelerates the degradation of transcripts by removing pyrophosphate from the 5'-end of triphosphorylated RNA, leading to a more labile monophosphorylated state that can stimulate subsequent ribonuclease cleavage. The chain is RNA pyrophosphohydrolase from Shewanella sp. (strain ANA-3).